The primary structure comprises 119 residues: Immunoglobulin heavy variable 2-5 (119 aa).

The N-terminal stretch at 1-19 is a signal peptide; the sequence is MDTLCSTLLLLTIPSWVLS. Gln-20 is modified (pyrrolidone carboxylic acid). Residues 20–44 are framework-1; that stretch reads QITLKESGPTLVKPTQTLTLTCTFS. The 100-residue stretch at 20–119 folds into the Ig-like domain; that stretch reads QITLKESGPT…DTATYYCAHR (100 aa). A disulfide bond links Cys-41 and Cys-116. The tract at residues 45-54 is complementarity-determining-1; it reads GFSLSTSGVG. A framework-2 region spans residues 55-71; that stretch reads VGWIRQPPGKALEWLAL. The interval 72–78 is complementarity-determining-2; the sequence is IYWDDDK. The tract at residues 79-116 is framework-3; that stretch reads RYSPSLKSRLTITKDTSKNQVVLTMTNMDPVDTATYYC. Residues 117-119 are complementarity-determining-3; sequence AHR.

As to quaternary structure, immunoglobulins are composed of two identical heavy chains and two identical light chains; disulfide-linked.

It localises to the secreted. The protein resides in the cell membrane. V region of the variable domain of immunoglobulin heavy chains that participates in the antigen recognition. Immunoglobulins, also known as antibodies, are membrane-bound or secreted glycoproteins produced by B lymphocytes. In the recognition phase of humoral immunity, the membrane-bound immunoglobulins serve as receptors which, upon binding of a specific antigen, trigger the clonal expansion and differentiation of B lymphocytes into immunoglobulins-secreting plasma cells. Secreted immunoglobulins mediate the effector phase of humoral immunity, which results in the elimination of bound antigens. The antigen binding site is formed by the variable domain of one heavy chain, together with that of its associated light chain. Thus, each immunoglobulin has two antigen binding sites with remarkable affinity for a particular antigen. The variable domains are assembled by a process called V-(D)-J rearrangement and can then be subjected to somatic hypermutations which, after exposure to antigen and selection, allow affinity maturation for a particular antigen. The protein is Immunoglobulin heavy variable 2-5 of Homo sapiens (Human).